Consider the following 371-residue polypeptide: MAENLEIPADLKPADGRFGCGPSKVRPEQLKALAASGDLFGTSHRQAPVKNLVGRVRDGLRQLFALPDGYEVILGNGGSTAFWDAAAFGLVDKRSLHLTYGEFSAKFASAVAKNPFVGDPIIVKADAGSAPKPQSDPSVDVIAWAHNETSTGVAVPVVRPDGSGDALIVIDATSAAGGLPVDITEADAYYFAPQKNFAGDGGLWLAILSPAALARVDAIAAAGRWVPEFLSLPIAIENSLKNQTYNTPAIATLILLAEQIDWLLGNGGLDWATKRTAESSSRLYSWAEAASFATPFVADPALRSQVVGTVDFSDSVDAAAVAKVLRANGVVDTEPYRKLGRNQLRVGMFPAVEPDDVSALTACVDWVVERL.

Arg-45 is a binding site for L-glutamate. Pyridoxal 5'-phosphate is bound by residues Phe-103, Thr-149, Asp-171, and Gln-194. The residue at position 195 (Lys-195) is an N6-(pyridoxal phosphate)lysine. Residue 246-247 (NT) coordinates pyridoxal 5'-phosphate.

The protein belongs to the class-V pyridoxal-phosphate-dependent aminotransferase family. SerC subfamily. In terms of assembly, homodimer. Pyridoxal 5'-phosphate serves as cofactor.

It is found in the cytoplasm. The catalysed reaction is O-phospho-L-serine + 2-oxoglutarate = 3-phosphooxypyruvate + L-glutamate. It carries out the reaction 4-(phosphooxy)-L-threonine + 2-oxoglutarate = (R)-3-hydroxy-2-oxo-4-phosphooxybutanoate + L-glutamate. Its pathway is amino-acid biosynthesis; L-serine biosynthesis; L-serine from 3-phospho-D-glycerate: step 2/3. It participates in cofactor biosynthesis; pyridoxine 5'-phosphate biosynthesis; pyridoxine 5'-phosphate from D-erythrose 4-phosphate: step 3/5. Functionally, catalyzes the reversible conversion of 3-phosphohydroxypyruvate to phosphoserine and of 3-hydroxy-2-oxo-4-phosphonooxybutanoate to phosphohydroxythreonine. This is Putative phosphoserine aminotransferase from Mycolicibacterium vanbaalenii (strain DSM 7251 / JCM 13017 / BCRC 16820 / KCTC 9966 / NRRL B-24157 / PYR-1) (Mycobacterium vanbaalenii).